Here is a 71-residue protein sequence, read N- to C-terminus: Large ribosomal subunit protein bL28 (71 aa).

Belongs to the bacterial ribosomal protein bL28 family.

This is Large ribosomal subunit protein bL28 from Rubrobacter xylanophilus (strain DSM 9941 / JCM 11954 / NBRC 16129 / PRD-1).